A 276-amino-acid polypeptide reads, in one-letter code: Nickel import system permease protein NikC (276 aa).

The next 5 membrane-spanning stretches (helical) occupy residues 10–30 (LIFFVFVAFIFVVIVLQFFVS), 73–93 (LFVTVLTLIAIVVIGVTLGLF), 108–128 (FIDVGLSIPEFIIMIALASFF), 186–206 (IIPAIIVLMVVDFGKIILYIS), and 238–258 (IMLIAPASVIAITILIFNLTG). Residues 69–258 (ARSTLFVTVL…ITILIFNLTG (190 aa)) form the ABC transmembrane type-1 domain.

It belongs to the binding-protein-dependent transport system permease family. OppBC subfamily. As to quaternary structure, the complex is composed of two ATP-binding proteins (NikD and NikE), two transmembrane proteins (NikB and NikC) and a solute-binding protein (NikA).

It localises to the cell membrane. Its function is as follows. Part of the ABC transporter complex NikABCDE (Opp2) involved in nickel import. Probably responsible for the translocation of the substrate across the membrane. In Staphylococcus aureus (strain Mu50 / ATCC 700699), this protein is Nickel import system permease protein NikC.